Consider the following 727-residue polypeptide: MQIRLKPDYSFFIASSSTMASTSSLGPSTLLSYGSPSRQFPDFGFRLISGHESVRIPSFRRFRVHCESKEKEVKPSSPFLESSSFSGDAALRSSEWKAVPDIWRSSAEKYGDRVALVDPYHDPPLKLTYKQLEQEILDFAEGLRVLGVKADEKIALFADNSCRWLVSDQGIMATGAVNVVRGSRSSVEELLQIYRHSESVAIVVDNPEFFNRIAESFTSKASLRFLILLWGEKSSLVTQGMQIPVYSYAEIINQGQESRAKLSASNDTRSYRNQFIDSDDTAAIMYTSGTTGNPKGVMLTHRNLLHQIKHLSKYVPAQAGDKFLSMLPSWHAYERASEYFIFTCGVEQMYTSIRYLKDDLKRYQPNYIVSVPLVYETLYSGIQKQISASSAGRKFLALTLIKVSMAYMEMKRIYEGMCLTKEQKPPMYIVAFVDWLWARVIAALLWPLHMLAKKLIYKKIHSSIGISKAGISGGGSLPIHVDKFFEAIGVILQNGYGLTETSPVVCARTLSCNVLGSAGHPMHGTEFKIVDPETNNVLPPGSKGIIKVRGPQVMKGYYKNPSTTKQVLNESGWFNTGDTGWIAPHHSKGRSRHCGGVIVLEGRAKDTIVLSTGENVEPLEIEEAAMRSRVIEQIVVIGQDRRRLGAIIIPNKEEAQRVDPETSKETLKSLVYQELRKWTSECSFQVGPVLIVDDPFTIDNGLMTPTMKIRRDMVVAKYKEEIDQLYS.

Residues 1-66 (MQIRLKPDYS…PSFRRFRVHC (66 aa)) constitute a chloroplast transit peptide.

This sequence belongs to the ATP-dependent AMP-binding enzyme family.

The protein localises to the plastid. It localises to the chloroplast. The enzyme catalyses a long-chain fatty acid + holo-[ACP] + ATP = a long-chain fatty acyl-[ACP] + AMP + diphosphate. Its function is as follows. Probably involved in the activation of fatty acids to acyl-carrier-protein prior to fatty acid elongation in plastids. Acts on medium- to long-chain fatty acids. The polypeptide is Long-chain-fatty-acid--[acyl-carrier-protein] ligase AEE15, chloroplastic (AAE15) (Arabidopsis thaliana (Mouse-ear cress)).